A 522-amino-acid chain; its full sequence is N-acetylgalactosamine-6-sulfatase (522 aa).

The N-terminal stretch at 1–26 (MAAVVAATRWWQLLLVLSAAGMGASG) is a signal peptide. A catalytic domain region spans residues 27–379 (APQPPNILLL…PTLLQGRLMD (353 aa)). 3 residues coordinate Ca(2+): D39, D40, and C79. The active-site Nucleophile is the C79. At C79 the chain carries 3-oxoalanine (Cys). The active site involves H142. An N-linked (GlcNAc...) asparagine glycan is attached at N204. 2 residues coordinate Ca(2+): D288 and N289. Residues C308 and C419 are joined by a disulfide bond. N-linked (GlcNAc...) asparagine glycosylation occurs at N423. 2 disulfides stabilise this stretch: C489-C518 and C501-C507.

The protein belongs to the sulfatase family. As to quaternary structure, homodimer. Ca(2+) serves as cofactor. The conversion to 3-oxoalanine (also known as C-formylglycine, FGly), of a serine or cysteine residue in prokaryotes and of a cysteine residue in eukaryotes, is critical for catalytic activity.

The protein localises to the lysosome. The catalysed reaction is Hydrolysis of the 6-sulfate groups of the N-acetyl-D-galactosamine 6-sulfate units of chondroitin sulfate and of the D-galactose 6-sulfate units of keratan sulfate.. This chain is N-acetylgalactosamine-6-sulfatase (GALNS), found in Homo sapiens (Human).